Reading from the N-terminus, the 652-residue chain is ATP-dependent zinc metalloprotease FtsH (652 aa).

Over 1-11 (MKKQNNGLIKN) the chain is Cytoplasmic. Residues 12–32 (PFLWLLFIFFLVTGFQYFYSG) form a helical membrane-spanning segment. The Extracellular segment spans residues 33 to 131 (NNSGGSQQIN…EVTVKHESSS (99 aa)). The chain crosses the membrane as a helical span at residues 132–152 (GIWINLLVSIVPFGILFFFLF). Residues 153-652 (SMMGNMGGGN…EVKSKMNDEK (500 aa)) lie on the Cytoplasmic side of the membrane. Residue 227–234 (GPPGTGKT) coordinates ATP. Position 449 (H449) interacts with Zn(2+). Residue E450 is part of the active site. Positions 453 and 525 each coordinate Zn(2+). Residues 628–652 (MPEAVEEESHALSYDEVKSKMNDEK) form a disordered region. The span at 634–652 (EESHALSYDEVKSKMNDEK) shows a compositional bias: basic and acidic residues.

This sequence in the central section; belongs to the AAA ATPase family. The protein in the C-terminal section; belongs to the peptidase M41 family. Homohexamer. Requires Zn(2+) as cofactor.

The protein resides in the cell membrane. Acts as a processive, ATP-dependent zinc metallopeptidase for both cytoplasmic and membrane proteins. Plays a role in the quality control of integral membrane proteins. This is ATP-dependent zinc metalloprotease FtsH from Streptococcus pneumoniae serotype 4 (strain ATCC BAA-334 / TIGR4).